A 77-amino-acid polypeptide reads, in one-letter code: UPF0401 protein c0279 (77 aa).

It belongs to the UPF0401 family.

This Escherichia coli O6:H1 (strain CFT073 / ATCC 700928 / UPEC) protein is UPF0401 protein c0279.